A 405-amino-acid polypeptide reads, in one-letter code: Dynactin subunit 2 (405 aa).

The disordered stretch occupies residues 1-24 (MADPKYADLPGIARNEPDVYETSD). A coiled-coil region spans residues 101–134 (PQQKYQRLLHEIQELTQEVEKAQSTVKESAAEEK). Residues 186-207 (AKTRKNPEGKSPAKGPGPDNEN) are disordered. A coiled-coil region spans residues 383-403 (KENLATVEDNFTSIDARIKKL).

It belongs to the dynactin subunit 2 family. As to quaternary structure, subunit of dynactin, a multiprotein complex part of a tripartite complex with dynein and a adapter, such as BICDL1, BICD2 or HOOK3. The dynactin complex is built around ACTR1A/ACTB filament and consists of an actin-related filament composed of a shoulder domain, a pointed end and a barbed end. Its length is defined by its flexible shoulder domain. The soulder is composed of 2 DCTN1 subunits, 4 DCTN2 and 2 DCTN3.

It localises to the cytoplasm. The protein localises to the cytoskeleton. Its subcellular location is the microtubule organizing center. The protein resides in the centrosome. It is found in the membrane. Its function is as follows. Part of the dynactin complex that activates the molecular motor dynein for ultra-processive transport along microtubules. In the dynactin soulder domain, binds the ACTR1A filament and acts as a molecular ruler to determine the length. Modulates cytoplasmic dynein binding to an organelle, and plays a role in prometaphase chromosome alignment and spindle organization during mitosis. Involved in anchoring microtubules to centrosomes. In Xenopus tropicalis (Western clawed frog), this protein is Dynactin subunit 2 (dctn2).